Consider the following 950-residue polypeptide: RNA polymerase-associated protein RapA (950 aa).

Residues 165–333 (EVADRMAPRV…FARLRLLDPN (169 aa)) form the Helicase ATP-binding domain. Position 178-185 (178-185 (DEVGLGKT)) interacts with ATP. The DEAH box signature appears at 279–282 (DEAH). In terms of domain architecture, Helicase C-terminal spans 475–629 (RVEWLIDTLK…TCPTGNALQH (155 aa)).

This sequence belongs to the SNF2/RAD54 helicase family. RapA subfamily. Interacts with the RNAP. Has a higher affinity for the core RNAP than for the holoenzyme. Its ATPase activity is stimulated by binding to RNAP.

Functionally, transcription regulator that activates transcription by stimulating RNA polymerase (RNAP) recycling in case of stress conditions such as supercoiled DNA or high salt concentrations. Probably acts by releasing the RNAP, when it is trapped or immobilized on tightly supercoiled DNA. Does not activate transcription on linear DNA. Probably not involved in DNA repair. This Pseudomonas aeruginosa (strain LESB58) protein is RNA polymerase-associated protein RapA.